The sequence spans 373 residues: tRNA-specific 2-thiouridylase MnmA (373 aa).

ATP is bound by residues 12–19 (GMSGGVDS) and M38. The tract at residues 98–100 (NPD) is interaction with target base in tRNA. The active-site Nucleophile is C103. C103 and C200 are joined by a disulfide. G127 contributes to the ATP binding site. Residues 150 to 152 (KDQ) form an interaction with tRNA region. Catalysis depends on C200, which acts as the Cysteine persulfide intermediate. Residues 312–313 (RY) are interaction with tRNA.

This sequence belongs to the MnmA/TRMU family.

Its subcellular location is the cytoplasm. It catalyses the reaction S-sulfanyl-L-cysteinyl-[protein] + uridine(34) in tRNA + AH2 + ATP = 2-thiouridine(34) in tRNA + L-cysteinyl-[protein] + A + AMP + diphosphate + H(+). Catalyzes the 2-thiolation of uridine at the wobble position (U34) of tRNA, leading to the formation of s(2)U34. This is tRNA-specific 2-thiouridylase MnmA from Streptococcus pyogenes serotype M12 (strain MGAS2096).